We begin with the raw amino-acid sequence, 293 residues long: Ribosomal protein L11 methyltransferase (293 aa).

Residues threonine 145, glycine 166, aspartate 188, and asparagine 230 each contribute to the S-adenosyl-L-methionine site.

This sequence belongs to the methyltransferase superfamily. PrmA family.

It is found in the cytoplasm. The enzyme catalyses L-lysyl-[protein] + 3 S-adenosyl-L-methionine = N(6),N(6),N(6)-trimethyl-L-lysyl-[protein] + 3 S-adenosyl-L-homocysteine + 3 H(+). Methylates ribosomal protein L11. This chain is Ribosomal protein L11 methyltransferase, found in Shewanella sediminis (strain HAW-EB3).